The following is an 870-amino-acid chain: DNA mismatch repair protein MutS (870 aa).

608-615 (GPNMAGKS) provides a ligand contact to ATP.

It belongs to the DNA mismatch repair MutS family.

Its function is as follows. This protein is involved in the repair of mismatches in DNA. It is possible that it carries out the mismatch recognition step. This protein has a weak ATPase activity. This chain is DNA mismatch repair protein MutS, found in Persephonella marina (strain DSM 14350 / EX-H1).